The primary structure comprises 41 residues: Cytochrome b559 subunit beta (41 aa).

Residues 16–32 form a helical membrane-spanning segment; that stretch reads WLAVHALAVPTVFFLGS. Histidine 20 is a binding site for heme.

The protein belongs to the PsbE/PsbF family. As to quaternary structure, heterodimer of an alpha subunit and a beta subunit. PSII is composed of 1 copy each of membrane proteins PsbA, PsbB, PsbC, PsbD, PsbE, PsbF, PsbH, PsbI, PsbJ, PsbK, PsbL, PsbM, PsbT, PsbX, PsbY, PsbZ, Psb30/Ycf12, at least 3 peripheral proteins of the oxygen-evolving complex and a large number of cofactors. It forms dimeric complexes. The cofactor is heme b.

It is found in the plastid. Its subcellular location is the chloroplast thylakoid membrane. Its function is as follows. This b-type cytochrome is tightly associated with the reaction center of photosystem II (PSII). PSII is a light-driven water:plastoquinone oxidoreductase that uses light energy to abstract electrons from H(2)O, generating O(2) and a proton gradient subsequently used for ATP formation. It consists of a core antenna complex that captures photons, and an electron transfer chain that converts photonic excitation into a charge separation. The protein is Cytochrome b559 subunit beta of Nephroselmis olivacea (Green alga).